The sequence spans 144 residues: MVLSRLAASGLLLLALLALSVDGKPVQQWAQSWPGPNIPQLLVQQWAQGGWPRPGPEIPPLTVQQWAQNWPHPQIPPLTVQQWAQGRPPGPPIPPLTVQQWAQARPPHPPIPPAPLQKWAPVQKWAPVQKWAPVQKWAPLLQPT.

The first 23 residues, 1–23 (MVLSRLAASGLLLLALLALSVDG), serve as a signal peptide directing secretion. The propeptide occupies 24–30 (KPVQQWA). Residue glutamine 31 is modified to Pyrrolidone carboxylic acid. Residues 41-47 (LLVQQWA) constitute a propeptide that is removed on maturation. Glutamine 48 carries the post-translational modification Pyrrolidone carboxylic acid. Positions 61–67 (LTVQQWA) are excised as a propeptide. Glutamine 68 carries the post-translational modification Pyrrolidone carboxylic acid. A propeptide spanning residues 78–84 (LTVQQWA) is cleaved from the precursor. The segment at 81–110 (QQWAQGRPPGPPIPPLTVQQWAQARPPHPP) is disordered. Glutamine 85 carries the pyrrolidone carboxylic acid modification. Residues 96-102 (LTVQQWA) constitute a propeptide that is removed on maturation. At glutamine 103 the chain carries Pyrrolidone carboxylic acid. Residues 114-116 (APL) constitute a propeptide that is removed on maturation. Glutamine 117 bears the Pyrrolidone carboxylic acid mark. Valine 122 is a propeptide. At glutamine 123 the chain carries Pyrrolidone carboxylic acid. A propeptide spanning residues 128–144 (VQKWAPVQKWAPLLQPT) is cleaved from the precursor.

The protein in the N-terminal section; belongs to the bradykinin-potentiating peptide family. In terms of tissue distribution, expressed by venom gland.

The protein resides in the secreted. The protein localises to the cytoplasm. It is found in the cytosol. Its function is as follows. Peptide with several activities. It inhibits the activity of the angiotensin-converting enzyme (ACE) by a preferential interaction with its C-domain. It evokes transient hypotension (-14 mmHg) similar to that evoked by 0.5 ug of bradykinin, when injected alone into rats. It has a high bradykinin-potentiating effect (120%), when 60 nmol of BPP-10c are coinjected with 0.5 ug of bradykinin into rats. Does not affect angiotensin-1 pressor effects. Shows potent and long-lasting antihypertensive activity as well as a reduction of the heart rate. It also binds and dose-dependently promotes the activation of cytosolic argininosuccinate synthase (ASS1), an enzyme that catalyzes the conversion of citrulline, L-aspartate and ATP to argininosuccinate, AMP and pyrophosphate. It also enhances ASS1-dependent arginine production in HEK 293 cells, as well as in spontaneous hypertensive rat (SHR) and Wistar rat plasma. In addition, it induces the production of nitric-oxide (NO) by HUVEC cells via the endothelial nitric-oxide synthase (NOS3), which use arginine as a substrate and produce NO. It has been shown to be internalized by ASS1-expressing endothelial (HUVEC) and kidney (HEK 293) cells, and is detected homogenously distributed within the cell cytoplasm for up to 2 hours. In terms of biological role, acts as indirect hypotensive agent. Increases leukocyte rolling flux and adhesion by five-fold in post-capillary venules, without any increments in vasodilation of arterioles. Acts as indirect hypotensive agent. Potently induces vasodilation of arterioles, with only a small increase in leukocyte rolling flux. The protein is Bradykinin-potentiating and C-type natriuretic peptides isoform 2 of Bothrops jararacussu (Jararacussu).